A 1614-amino-acid chain; its full sequence is Adenylate cyclase type 10 (1614 aa).

Guanylate cyclase domains lie at 42-179 (VLMF…RLAQ) and 293-418 (TIVF…ARMM). Aspartate 47 and isoleucine 48 together coordinate Mg(2+). Residue 47–52 (DISGFT) coordinates ATP. A hydrogencarbonate-binding site is contributed by lysine 95. Position 99 (aspartate 99) interacts with Mg(2+). Aspartate 99 and lysine 144 together coordinate ATP. The hydrogencarbonate site is built by valine 167, arginine 176, and methionine 337. ATP-binding positions include valine 406 and 412–416 (NIAAR).

It belongs to the adenylyl cyclase class-4/guanylyl cyclase family. The cofactor is Mg(2+). Mn(2+) is required as a cofactor. As to expression, expressed in testis.

Its subcellular location is the cell membrane. The protein localises to the cytoplasm. It localises to the cytoskeleton. It is found in the perinuclear region. The protein resides in the nucleus. Its subcellular location is the cell projection. The protein localises to the cilium. It localises to the mitochondrion. It carries out the reaction ATP = 3',5'-cyclic AMP + diphosphate. With respect to regulation, activated by manganese or magnesium ions. In the presence of magnesium ions, the enzyme is activated by bicarbonate. Calcium mildly increases the enzyme activity, also in the presence of magnesium ions. Its function is as follows. Catalyzes the formation of the signaling molecule cAMP. May function as sensor that mediates responses to changes in cellular bicarbonate and CO(2) levels. Has a critical role in mammalian spermatogenesis by producing the cAMP which regulates cAMP-responsive nuclear factors indispensable for sperm maturation in the epididymis. Induces capacitation, the maturational process that sperm undergo prior to fertilization. Involved in ciliary beat regulation. In Mus musculus (Mouse), this protein is Adenylate cyclase type 10 (Adcy10).